The sequence spans 546 residues: MTPGEVRRLYFIIRTFLSYGLDELIPKMRITLPLRLWRYSLFWMPNRHKDKLLGERLRLALQELGPVWIKFGQMLSTRRDLFPPHIADQLALLQDKVAPFDGKLAKQQIEAAMGGLPVEAWFDDFEIKPLASASIAQVHTARLKSNGKEVVIKVIRPDILPVIKADLKLIYRLARWVPRLLPDGRRLRPTEVVREYEKTLIDELNLLRESANAIQLRRNFEDSPMLYIPEVYPDYCSEGMMVMERIYGIPVSDVATLEKNGTNMKLLAERGVQVFFTQVFRDSFFHADMHPGNIFVSYEHPENPKYIGIDCGIVGSLNKEDKRYLAENFIAFFNRDYRKVAELHVDSGWVPPDTNVEEFEFAIRTVCEPIFEKPLAEISFGHVLLNLFNTARRFNMEVQPQLVLLQKTLLYVEGVGRQLYPQLDLWKTAKPFLESWIKDQVGIPALVRAFKEKAPFWVEKMPELPELVYDSLRQGKYLQHSVDKIARELQSNHVRQGQSRYFLGIGATLVLSGTFLLVSRPEWGLMPGWLMAGGLIAWFVGWRKTR.

One can recognise a Protein kinase domain in the interval 124–502; the sequence is DFEIKPLASA…HVRQGQSRYF (379 aa). Residues 130 to 138 and Lys-153 contribute to the ATP site; that span reads LASASIAQV. Residue Asp-288 is the Proton acceptor of the active site. Helical transmembrane passes span 501–521 and 522–542; these read YFLG…VSRP and EWGL…FVGW.

The protein belongs to the ABC1 family. UbiB subfamily.

The protein localises to the cell inner membrane. It participates in cofactor biosynthesis; ubiquinone biosynthesis [regulation]. Is probably a protein kinase regulator of UbiI activity which is involved in aerobic coenzyme Q (ubiquinone) biosynthesis. The chain is Probable protein kinase UbiB from Shigella sonnei (strain Ss046).